A 397-amino-acid chain; its full sequence is P2X purinoceptor 3 (397 aa).

Over M1–S20 the chain is Cytoplasmic. Residues W21–F43 traverse the membrane as a helical segment. The Extracellular segment spans residues L44–I322. Residues K63 and K65 each contribute to the ATP site. Disulfide bonds link C107–C153, C116–C137, and C122–C147. Residue E111 participates in Mg(2+) binding. N139 carries N-linked (GlcNAc...) asparagine glycosylation. D158 provides a ligand contact to Mg(2+). D158 serves as a coordination point for Ca(2+). The N-linked (GlcNAc...) asparagine glycan is linked to N170. ATP is bound at residue T172. N194 is a glycosylation site (N-linked (GlcNAc...) asparagine). 2 disulfide bridges follow: C203–C213 and C247–C256. Residues S275, N279, and R281 each contribute to the ATP site. N290 carries an N-linked (GlcNAc...) asparagine glycan. K299 is a binding site for ATP. A helical membrane pass occupies residues I323–I341. Residues I342–H397 are Cytoplasmic-facing. Residues S378–G391 show a composition bias toward polar residues. The interval S378 to H397 is disordered.

The protein belongs to the P2X receptor family. In terms of assembly, homotrimer. Forms heterotrimer with P2RX2. Heterotrimeric P2RX2/3 has a ligand dose-response profile that is distinct from either homotrimeric P2RX2 or P2RX3.

It is found in the cell membrane. It carries out the reaction Ca(2+)(in) = Ca(2+)(out). The catalysed reaction is Na(+)(in) = Na(+)(out). With respect to regulation, has high sensitivity to ATP. Fast activation by external ATP. Exhibits rapid desensitization. Sensitives to the ATP agonist:alpha/beta-methylene-ATP. Subject to allosteric inhibition by AF-219. Mg(2+) and Ca(2+) slow deactivation of P2RX3. Its function is as follows. Extracellular ATP-activated non-selective cation channel. Plays particularly important role in sensory neurons where its activation is critical for gustatory, nociceptive responses, visceral reflexes and sensory hypersensitization. In Homo sapiens (Human), this protein is P2X purinoceptor 3 (P2RX3).